Consider the following 535-residue polypeptide: Growth-regulating factor 2 (535 aa).

The QLQ domain maps to 164 to 199 (PFTLTQWAELEQQALIYKYITANVPVPSSLLISIKK). Residues 227-271 (DPEPGRCRRTDGKKWRCSRDAVPDQKYCERHINRGRHRSRKPVEV) form the WRC domain. 2 short sequence motifs (bipartite nuclear localization signal) span residues 232 to 242 (RCRRTDGKKWR) and 260 to 267 (RGRHRSRK). 3 disordered regions span residues 260-308 (RGRH…ASSN), 417-437 (PIASSSPSSTHNNNNAQEKTT), and 514-535 (SSVSSPIAENNRHNGDYFHYTT). The segment covering 272–291 (QSGQNQTAAAASKAVTTPQQ) has biased composition (polar residues). The segment covering 299–308 (NRSNARASSN) has biased composition (low complexity). Residues 426-437 (THNNNNAQEKTT) show a composition bias toward polar residues.

Belongs to the GRF family. In terms of assembly, interacts with GIF1. As to expression, strongly expressed in actively growing and developing tissues, such as roots, upper stems, and shoot tips containing the shoot apical meristem (SAM) and flower buds. Detected in young leaf primordium. Also expressed in mature flowers, but weakly expressed in mature stems and leaves.

It is found in the nucleus. In terms of biological role, transcription activator that plays a role in the regulation of cell expansion in leaf and cotyledons tissues. Component of a network formed by miR396, the GRFs and their interacting factors (GIFs) acting in the regulation of meristem function, at least partially through the control of cell proliferation. The polypeptide is Growth-regulating factor 2 (GRF2) (Arabidopsis thaliana (Mouse-ear cress)).